The sequence spans 137 residues: MRLSRAFAWPLLCSIATTVKAPFATAPSDCGGHYTDEYGRIFNYAGPKTECVWIIELNPGEIVTVAIPDLKGFACGKEYVEVLDGPPGSESLDRICKAFSTFYYSSSNIITIKYSREPSHPPTFFEIYYFVDAWSTH.

The first 21 residues, 1-21 (MRLSRAFAWPLLCSIATTVKA), serve as a signal peptide directing secretion. 2 disulfides stabilise this stretch: C30–C51 and C75–C96. One can recognise a CUB domain in the interval 30–132 (CGGHYTDEYG…TFFEIYYFVD (103 aa)).

The protein is CUB domain-containing protein of Homo sapiens (Human).